We begin with the raw amino-acid sequence, 448 residues long: Cysteine--tRNA ligase (448 aa).

C29 contacts Zn(2+). Positions 31–41 match the 'HIGH' region motif; sequence PTVYDTAHIGN. Basic and acidic residues predominate over residues 79–91; it reads ATTGADRGADQAH. Positions 79 to 106 are disordered; the sequence is ATTGADRGADQAHRGPLPRRHGPLNAAP. Zn(2+) is bound by residues C206 and E235. The 'KMSKS' region motif lies at 265 to 269; the sequence is RMSKS. An ATP-binding site is contributed by K268.

It belongs to the class-I aminoacyl-tRNA synthetase family. In terms of assembly, monomer. The cofactor is Zn(2+).

Its subcellular location is the cytoplasm. It carries out the reaction tRNA(Cys) + L-cysteine + ATP = L-cysteinyl-tRNA(Cys) + AMP + diphosphate. The chain is Cysteine--tRNA ligase (cysS) from Azospirillum brasilense.